The sequence spans 352 residues: Peptide chain release factor 1 (352 aa).

Position 230 is an N5-methylglutamine (glutamine 230).

This sequence belongs to the prokaryotic/mitochondrial release factor family. Methylated by PrmC. Methylation increases the termination efficiency of RF1.

It is found in the cytoplasm. In terms of biological role, peptide chain release factor 1 directs the termination of translation in response to the peptide chain termination codons UAG and UAA. The protein is Peptide chain release factor 1 of Exiguobacterium sibiricum (strain DSM 17290 / CCUG 55495 / CIP 109462 / JCM 13490 / 255-15).